Consider the following 447-residue polypeptide: Tubulin beta-1 chain (447 aa).

Gln11 contributes to the GTP binding site. Ser40 bears the Phosphoserine mark. Residues Glu69, Ser138, Gly142, Thr143, Gly144, Asn204, and Asn226 each contribute to the GTP site. Glu69 is a binding site for Mg(2+). Ser339 is subject to Phosphoserine. Residues Glu427–Asn447 form a disordered region. Over residues Thr429–Asn447 the composition is skewed to acidic residues.

Belongs to the tubulin family. In terms of assembly, dimer of alpha and beta chains. A typical microtubule is a hollow water-filled tube with an outer diameter of 25 nm and an inner diameter of 15 nM. Alpha-beta heterodimers associate head-to-tail to form protofilaments running lengthwise along the microtubule wall with the beta-tubulin subunit facing the microtubule plus end conferring a structural polarity. Microtubules usually have 13 protofilaments but different protofilament numbers can be found in some organisms and specialized cells. Interacts with mgr and Vhl. Mg(2+) is required as a cofactor.

Its subcellular location is the cytoplasm. The protein localises to the cytoskeleton. Functionally, tubulin is the major constituent of microtubules, a cylinder consisting of laterally associated linear protofilaments composed of alpha- and beta-tubulin heterodimers. Microtubules grow by the addition of GTP-tubulin dimers to the microtubule end, where a stabilizing cap forms. Below the cap, tubulin dimers are in GDP-bound state, owing to GTPase activity of alpha-tubulin. In Drosophila melanogaster (Fruit fly), this protein is Tubulin beta-1 chain (betaTub56D).